The primary structure comprises 469 residues: ATP synthase subunit beta (469 aa).

Residue 157-164 (GGAGVGKT) participates in ATP binding.

The protein belongs to the ATPase alpha/beta chains family. F-type ATPases have 2 components, CF(1) - the catalytic core - and CF(0) - the membrane proton channel. CF(1) has five subunits: alpha(3), beta(3), gamma(1), delta(1), epsilon(1). CF(0) has three main subunits: a(1), b(2) and c(9-12). The alpha and beta chains form an alternating ring which encloses part of the gamma chain. CF(1) is attached to CF(0) by a central stalk formed by the gamma and epsilon chains, while a peripheral stalk is formed by the delta and b chains.

The protein localises to the cell membrane. The enzyme catalyses ATP + H2O + 4 H(+)(in) = ADP + phosphate + 5 H(+)(out). Its function is as follows. Produces ATP from ADP in the presence of a proton gradient across the membrane. The catalytic sites are hosted primarily by the beta subunits. This chain is ATP synthase subunit beta, found in Brevibacillus brevis (strain 47 / JCM 6285 / NBRC 100599).